Here is a 269-residue protein sequence, read N- to C-terminus: NAD kinase (269 aa).

Asp-62 serves as the catalytic Proton acceptor. NAD(+) contacts are provided by residues Asp-62–Gly-63, Asn-130–Glu-131, Lys-141, Arg-158, Asp-160, Thr-171–Ser-176, Ala-195, and Gln-229.

The protein belongs to the NAD kinase family. It depends on a divalent metal cation as a cofactor.

The protein localises to the cytoplasm. It catalyses the reaction NAD(+) + ATP = ADP + NADP(+) + H(+). Functionally, involved in the regulation of the intracellular balance of NAD and NADP, and is a key enzyme in the biosynthesis of NADP. Catalyzes specifically the phosphorylation on 2'-hydroxyl of the adenosine moiety of NAD to yield NADP. This Methanospirillum hungatei JF-1 (strain ATCC 27890 / DSM 864 / NBRC 100397 / JF-1) protein is NAD kinase.